Reading from the N-terminus, the 495-residue chain is UDP-N-acetylmuramoyl-L-alanyl-D-glutamate--2,6-diaminopimelate ligase (495 aa).

UDP-N-acetyl-alpha-D-muramoyl-L-alanyl-D-glutamate contacts are provided by residues Leu27, Ser29, and 44–46; that span reads HQA. ATP is bound at residue 116–122; that stretch reads GTNGKTT. UDP-N-acetyl-alpha-D-muramoyl-L-alanyl-D-glutamate contacts are provided by residues Asn157, 158-159, Ser185, Gln191, and Arg193; that span reads TT. Lys225 is subject to N6-carboxylysine. Meso-2,6-diaminopimelate contacts are provided by residues Arg390, 414 to 417, Gly465, and Glu469; that span reads DNPR. The Meso-diaminopimelate recognition motif signature appears at 414–417; the sequence is DNPR.

Belongs to the MurCDEF family. MurE subfamily. The cofactor is Mg(2+). Post-translationally, carboxylation is probably crucial for Mg(2+) binding and, consequently, for the gamma-phosphate positioning of ATP.

The protein localises to the cytoplasm. It carries out the reaction UDP-N-acetyl-alpha-D-muramoyl-L-alanyl-D-glutamate + meso-2,6-diaminopimelate + ATP = UDP-N-acetyl-alpha-D-muramoyl-L-alanyl-gamma-D-glutamyl-meso-2,6-diaminopimelate + ADP + phosphate + H(+). The protein operates within cell wall biogenesis; peptidoglycan biosynthesis. In terms of biological role, catalyzes the addition of meso-diaminopimelic acid to the nucleotide precursor UDP-N-acetylmuramoyl-L-alanyl-D-glutamate (UMAG) in the biosynthesis of bacterial cell-wall peptidoglycan. The chain is UDP-N-acetylmuramoyl-L-alanyl-D-glutamate--2,6-diaminopimelate ligase from Salmonella choleraesuis (strain SC-B67).